We begin with the raw amino-acid sequence, 345 residues long: Eukaryotic translation initiation factor 3 subunit F (345 aa).

The MPN domain occupies Val30 to Gly166. A disordered region spans residues Gly308 to Ala345. The span at Gln322 to Gly331 shows a compositional bias: gly residues. A compositionally biased stretch (basic and acidic residues) spans Asn335–Ala345.

The protein belongs to the eIF-3 subunit F family. In terms of assembly, component of the eukaryotic translation initiation factor 3 (eIF-3) complex.

Its subcellular location is the cytoplasm. In terms of biological role, component of the eukaryotic translation initiation factor 3 (eIF-3) complex, which is involved in protein synthesis of a specialized repertoire of mRNAs and, together with other initiation factors, stimulates binding of mRNA and methionyl-tRNAi to the 40S ribosome. The eIF-3 complex specifically targets and initiates translation of a subset of mRNAs involved in cell proliferation. In Aspergillus clavatus (strain ATCC 1007 / CBS 513.65 / DSM 816 / NCTC 3887 / NRRL 1 / QM 1276 / 107), this protein is Eukaryotic translation initiation factor 3 subunit F.